A 568-amino-acid chain; its full sequence is Circadian clock protein KaiC2 (568 aa).

2 KaiC domains span residues 11–250 (IKCP…SVSQ) and 251–485 (ERIS…LTGT). Phosphoserine; by autocatalysis occurs at positions 423 and 424.

The protein belongs to the KaiC family. In terms of assembly, multimerizes, probably forming homohexamers, no interaction with KaiC1 or KaiC3 is seen.

The enzyme catalyses L-seryl-[protein] + ATP = O-phospho-L-seryl-[protein] + ADP + H(+). The catalysed reaction is L-threonyl-[protein] + ATP = O-phospho-L-threonyl-[protein] + ADP + H(+). It carries out the reaction ATP + H2O = ADP + phosphate + H(+). Functionally, autophosphorylates independently of KaiA. This is Circadian clock protein KaiC2 from Synechocystis sp. (strain ATCC 27184 / PCC 6803 / Kazusa).